Consider the following 260-residue polypeptide: Protein TONNEAU 1a (260 aa).

Positions 73-105 constitute a LisH domain; that stretch reads SGRLLSALICEYLDWAQLNHTLIVYQPESNLPK. 2 disordered regions span residues 147-224 and 236-260; these read TQGM…EEVT and DRKT…EGRD. A compositionally biased stretch (low complexity) spans 161 to 175; sequence ESSSSLESRNPPRRS. Positions 248 to 260 are enriched in basic and acidic residues; the sequence is NVRDGTNEEEGRD.

In terms of assembly, interacts with CEN1, LNG1/TRM2 and LNG2/TRM1 (via C-terminus).

It is found in the cytoplasm. Its subcellular location is the cytoskeleton. Involved in the control of the dynamic organization of the cortical cytoskeleton. May play a role in the organization of microtubule arrays at the centrosome through interaction with centrin 1 (CEN1). This Arabidopsis thaliana (Mouse-ear cress) protein is Protein TONNEAU 1a (TON1A).